A 117-amino-acid polypeptide reads, in one-letter code: Phosphoribosyl-ATP pyrophosphatase (117 aa).

The protein belongs to the PRA-PH family.

The protein resides in the cytoplasm. It carries out the reaction 1-(5-phospho-beta-D-ribosyl)-ATP + H2O = 1-(5-phospho-beta-D-ribosyl)-5'-AMP + diphosphate + H(+). The protein operates within amino-acid biosynthesis; L-histidine biosynthesis; L-histidine from 5-phospho-alpha-D-ribose 1-diphosphate: step 2/9. The sequence is that of Phosphoribosyl-ATP pyrophosphatase from Rhodospirillum rubrum (strain ATCC 11170 / ATH 1.1.1 / DSM 467 / LMG 4362 / NCIMB 8255 / S1).